The chain runs to 480 residues: Porphobilinogen deaminase, chloroplastic (480 aa).

Residues Met1–Ala139 constitute a chloroplast transit peptide. The residue at position 395 (Cys395) is an S-(dipyrrolylmethanemethyl)cysteine.

This sequence belongs to the HMBS family. The cofactor is dipyrromethane.

Its subcellular location is the plastid. The protein resides in the chloroplast. It carries out the reaction 4 porphobilinogen + H2O = hydroxymethylbilane + 4 NH4(+). It functions in the pathway porphyrin-containing compound metabolism; protoporphyrin-IX biosynthesis; coproporphyrinogen-III from 5-aminolevulinate: step 2/4. Its pathway is porphyrin-containing compound metabolism; chlorophyll biosynthesis. Its function is as follows. Tetrapolymerization of the monopyrrole PBG into the hydroxymethylbilane pre-uroporphyrinogen in several discrete steps. The sequence is that of Porphobilinogen deaminase, chloroplastic from Euglena gracilis.